Consider the following 170-residue polypeptide: Cytochrome bc1 complex Rieske iron-sulfur subunit (170 aa).

Residues 63–153 (KAALMIIRLE…IGVNDEGYLE (91 aa)) form the Rieske domain. Residues C96, H98, C115, and H118 each contribute to the [2Fe-2S] cluster site. Residues C101 and C117 are joined by a disulfide bond.

In terms of assembly, the cytochrome bc1 complex is composed of a cytochrome b (QcrB), the Rieske iron-sulfur protein (QcrA) and a diheme cytochrome c (QcrC) subunit. The cofactor is [2Fe-2S] cluster.

It is found in the cell membrane. Its function is as follows. Iron-sulfur subunit of the cytochrome bc1 complex, an essential component of the respiratory electron transport chain required for ATP synthesis. The bc1 complex catalyzes the oxidation of menaquinol and the reduction of cytochrome c in the respiratory chain. The bc1 complex operates through a Q-cycle mechanism that couples electron transfer to generation of the proton gradient that drives ATP synthesis. The sequence is that of Cytochrome bc1 complex Rieske iron-sulfur subunit (qcrA) from Streptomyces lividans.